The primary structure comprises 428 residues: Glutamate-1-semialdehyde 2,1-aminomutase 1 (428 aa).

K267 is modified (N6-(pyridoxal phosphate)lysine).

It belongs to the class-III pyridoxal-phosphate-dependent aminotransferase family. HemL subfamily. In terms of assembly, homodimer. It depends on pyridoxal 5'-phosphate as a cofactor.

It localises to the cytoplasm. The catalysed reaction is (S)-4-amino-5-oxopentanoate = 5-aminolevulinate. It functions in the pathway porphyrin-containing compound metabolism; protoporphyrin-IX biosynthesis; 5-aminolevulinate from L-glutamyl-tRNA(Glu): step 2/2. The sequence is that of Glutamate-1-semialdehyde 2,1-aminomutase 1 (hemL1) from Staphylococcus aureus (strain NCTC 8325 / PS 47).